The sequence spans 156 residues: Prolamin PPROL 17D (156 aa).

An N-terminal signal peptide occupies residues 1 to 19 (MKIIFFFALLAIAACSASA). Glutamine 20 bears the Pyrrolidone carboxylic acid mark.

It belongs to the prolamin family.

The protein resides in the vacuole. It localises to the aleurone grain. Seed storage protein; serves as a source of nitrogen, carbon and sulfur for the young developing seedling. The sequence is that of Prolamin PPROL 17D from Oryza sativa subsp. japonica (Rice).